The sequence spans 188 residues: UPF0301 protein Smal_0940 (188 aa).

Belongs to the UPF0301 (AlgH) family.

This Stenotrophomonas maltophilia (strain R551-3) protein is UPF0301 protein Smal_0940.